The primary structure comprises 150 residues: Endoribonuclease YbeY (150 aa).

3 residues coordinate Zn(2+): histidine 112, histidine 116, and histidine 122.

It belongs to the endoribonuclease YbeY family. Zn(2+) is required as a cofactor.

The protein localises to the cytoplasm. Functionally, single strand-specific metallo-endoribonuclease involved in late-stage 70S ribosome quality control and in maturation of the 3' terminus of the 16S rRNA. This chain is Endoribonuclease YbeY, found in Geobacter sulfurreducens (strain ATCC 51573 / DSM 12127 / PCA).